The chain runs to 278 residues: Probable ribosomal RNA small subunit methyltransferase A (278 aa).

S-adenosyl-L-methionine contacts are provided by Asn-23, Leu-25, Gly-50, Glu-71, Asp-95, and Asn-110.

Belongs to the class I-like SAM-binding methyltransferase superfamily. rRNA adenine N(6)-methyltransferase family. RsmA subfamily.

The protein localises to the cytoplasm. Specifically dimethylates two adjacent adenosines in the loop of a conserved hairpin near the 3'-end of 16S rRNA in the 30S particle. May play a critical role in biogenesis of 30S subunits. This is Probable ribosomal RNA small subunit methyltransferase A from Thermococcus gammatolerans (strain DSM 15229 / JCM 11827 / EJ3).